A 573-amino-acid polypeptide reads, in one-letter code: Potassium-transporting ATPase potassium-binding subunit (573 aa).

10 helical membrane passes run 6–26, 66–86, 135–155, 177–197, 257–277, 283–303, 382–402, 428–448, 493–513, and 537–557; these read ILFA…GSYI, FFSL…ILLL, ALAV…IALI, VFWI…FQGV, IQMV…GKWV, GWLI…VMTI, IFGG…LAVF, MFAL…AAVI, ITIA…VIML, and FIFA…TIFP.

This sequence belongs to the KdpA family. As to quaternary structure, the system is composed of three essential subunits: KdpA, KdpB and KdpC.

The protein localises to the cell inner membrane. In terms of biological role, part of the high-affinity ATP-driven potassium transport (or Kdp) system, which catalyzes the hydrolysis of ATP coupled with the electrogenic transport of potassium into the cytoplasm. This subunit binds the periplasmic potassium ions and delivers the ions to the membrane domain of KdpB through an intramembrane tunnel. This is Potassium-transporting ATPase potassium-binding subunit from Francisella tularensis subsp. holarctica (strain FTNF002-00 / FTA).